A 320-amino-acid polypeptide reads, in one-letter code: Eukaryotic translation initiation factor 3 subunit G (320 aa).

Residues 1–59 (MPTGDFDSKPSWADQVEEEGEDDKCVTSELLKGIPLATGDTSPEPELLPGAPLPPPKEV) form a disordered region. Residues serine 8 and serine 11 each carry the phosphoserine modification. Threonine 38 and threonine 41 each carry phosphothreonine. Phosphoserine is present on residues serine 42, serine 189, serine 223, and serine 264. Residues 209 to 234 (KTGKYVPPSLRDGASRRGESMQPNRR) are disordered. Over residues 221–234 (GASRRGESMQPNRR) the composition is skewed to basic and acidic residues. The RRM domain occupies 239-317 (ATIRVTNLSE…LILNVEWAKP (79 aa)).

As to quaternary structure, component of the eukaryotic translation initiation factor 3 (eIF-3) complex, which is composed of 13 subunits: EIF3A, EIF3B, EIF3C, EIF3D, EIF3E, EIF3F, EIF3G, EIF3H, EIF3I, EIF3J, EIF3K, EIF3L and EIF3M. The eIF-3 complex appears to include 3 stable modules: module A is composed of EIF3A, EIF3B, EIF3G and EIF3I; module B is composed of EIF3F, EIF3H, and EIF3M; and module C is composed of EIF3C, EIF3D, EIF3E, EIF3K and EIF3L. EIF3C of module C binds EIF3B of module A and EIF3H of module B, thereby linking the three modules. EIF3J is a labile subunit that binds to the eIF-3 complex via EIF3B. The eIF-3 complex interacts with RPS6KB1 under conditions of nutrient depletion. Mitogenic stimulation leads to binding and activation of a complex composed of MTOR and RPTOR, leading to phosphorylation and release of RPS6KB1 and binding of EIF4B to eIF-3. Interacts (via C-terminus) with AIFM1 (via N-terminus). Interacts with DHX33; the interaction is independent of RNA. Phosphorylated. Phosphorylation is enhanced upon serum stimulation.

The protein resides in the cytoplasm. It localises to the nucleus. Its subcellular location is the perinuclear region. Its function is as follows. RNA-binding component of the eukaryotic translation initiation factor 3 (eIF-3) complex, which is required for several steps in the initiation of protein synthesis. The eIF-3 complex associates with the 40S ribosome and facilitates the recruitment of eIF-1, eIF-1A, eIF-2:GTP:methionyl-tRNAi and eIF-5 to form the 43S pre-initiation complex (43S PIC). The eIF-3 complex stimulates mRNA recruitment to the 43S PIC and scanning of the mRNA for AUG recognition. The eIF-3 complex is also required for disassembly and recycling of post-termination ribosomal complexes and subsequently prevents premature joining of the 40S and 60S ribosomal subunits prior to initiation. The eIF-3 complex specifically targets and initiates translation of a subset of mRNAs involved in cell proliferation, including cell cycling, differentiation and apoptosis, and uses different modes of RNA stem-loop binding to exert either translational activation or repression. This subunit can bind 18S rRNA. (Microbial infection) In case of FCV infection, plays a role in the ribosomal termination-reinitiation event leading to the translation of VP2. In Homo sapiens (Human), this protein is Eukaryotic translation initiation factor 3 subunit G.